We begin with the raw amino-acid sequence, 282 residues long: NADPH-dependent 7-cyano-7-deazaguanine reductase (282 aa).

Substrate is bound at residue 88–90 (IES). 90 to 91 (SK) is a binding site for NADPH. Catalysis depends on C190, which acts as the Thioimide intermediate. Catalysis depends on D197, which acts as the Proton donor. 229-230 (HE) is a binding site for substrate. 258–259 (RG) contributes to the NADPH binding site.

The protein belongs to the GTP cyclohydrolase I family. QueF type 2 subfamily. In terms of assembly, homodimer.

It is found in the cytoplasm. It carries out the reaction 7-aminomethyl-7-carbaguanine + 2 NADP(+) = 7-cyano-7-deazaguanine + 2 NADPH + 3 H(+). It functions in the pathway tRNA modification; tRNA-queuosine biosynthesis. In terms of biological role, catalyzes the NADPH-dependent reduction of 7-cyano-7-deazaguanine (preQ0) to 7-aminomethyl-7-deazaguanine (preQ1). The sequence is that of NADPH-dependent 7-cyano-7-deazaguanine reductase from Escherichia coli O127:H6 (strain E2348/69 / EPEC).